A 435-amino-acid polypeptide reads, in one-letter code: Casein kinase 1-like protein 12 (435 aa).

Residues 9-278 (YRLGRKIGSG…LKRIFRDLFI (270 aa)) form the Protein kinase domain. Residues 15-23 (IGSGSFGEI) and lysine 38 contribute to the ATP site. Catalysis depends on aspartate 128, which acts as the Proton acceptor. 2 disordered regions span residues 313–363 (VGTS…RGPM) and 394–414 (LRNSPVVTTPEGKRSSSTRKH).

The protein belongs to the protein kinase superfamily. CK1 Ser/Thr protein kinase family. Casein kinase I subfamily. As to quaternary structure, monomer. In terms of processing, autophosphorylated.

It localises to the cytoplasm. The enzyme catalyses L-seryl-[protein] + ATP = O-phospho-L-seryl-[protein] + ADP + H(+). It carries out the reaction L-threonyl-[protein] + ATP = O-phospho-L-threonyl-[protein] + ADP + H(+). Its function is as follows. Casein kinases are operationally defined by their preferential utilization of acidic proteins such as caseins as substrates. It can phosphorylate a large number of proteins. The polypeptide is Casein kinase 1-like protein 12 (Arabidopsis thaliana (Mouse-ear cress)).